Reading from the N-terminus, the 421-residue chain is Protein HOMOLOG OF MAMMALIAN LYST-INTERACTING PROTEIN 5 (421 aa).

Ser-2 carries the post-translational modification N-acetylserine. The interval Ile-146–Pro-374 is disordered. The span at Ser-165–Thr-185 shows a compositional bias: polar residues. Residues His-188–Phe-207 are compositionally biased toward basic and acidic residues. Residues Leu-245–His-258 are compositionally biased toward pro residues. A compositionally biased stretch (polar residues) spans Asn-278–Gln-293. Composition is skewed to low complexity over residues Ser-294–Pro-308 and Pro-317–Ser-337.

The protein belongs to the VTA1 family. Homodimer. Interacts with SKD1/VPS4, VPS60-1, CHMP1A and CHMP1B. Binds to PROS/At4g24370. Interacts with MPK6 and MPK3. Post-translationally, phosphorylated by activated MPK6 and MPK3, this activation is required to trigger multivesicular bodies (MVBs) trafficking upon plant infection.

The protein resides in the cytoplasm. It is found in the endosome membrane. It localises to the nucleus. The protein localises to the endosome. Its subcellular location is the multivesicular body. Its function is as follows. Involved in the endosomal multivesicular bodies (MVB) pathway. MVBs contain intraluminal vesicles (ILVs) that are generated by invagination and scission from the limiting membrane of the endosome and are delivered to lysosomes enabling degradation of membrane proteins. Thought to be a cofactor of SKD1/VPS4, which catalyzes the disassembly of membrane-associated ESCRT-III. Target of pathogen-responsive mitogen-activated protein kinases (MPKs) that plays a critical role in plant basal resistance to Pseudomonas syringae in a SKD1-dependent manner by promoting multivesicular bodies (MVBs) trafficking upon plant infection. The chain is Protein HOMOLOG OF MAMMALIAN LYST-INTERACTING PROTEIN 5 from Arabidopsis thaliana (Mouse-ear cress).